The primary structure comprises 78 residues: Defensin-like protein 141 (78 aa).

The signal sequence occupies residues 1–24 (MTKSIISAFFIILILGMMVNEIEG). 4 disulfides stabilise this stretch: cysteine 31-cysteine 76, cysteine 40-cysteine 59, cysteine 45-cysteine 70, and cysteine 49-cysteine 72.

This sequence belongs to the DEFL family.

The protein localises to the secreted. This Arabidopsis thaliana (Mouse-ear cress) protein is Defensin-like protein 141 (LCR3).